The chain runs to 1861 residues: Protein TANC1 (1861 aa).

Position 1 is an N-acetylmethionine (methionine 1). Disordered regions lie at residues 1–46, 63–99, 206–225, 257–311, and 439–486; these read MLKA…SSLP, SLPSSPLLPRQSHLVQSRVNKKSPGPVRKPKYVESPR, KSPCETISSPSSTLESKDSG, QKGV…MPRP, and QIAS…ISAE. The segment covering 8-21 has biased composition (basic and acidic residues); it reads KSREGGKGGKKEAG. Phosphoserine is present on residues serine 63, serine 66, serine 67, serine 207, and serine 270. The span at 206–219 shows a compositional bias: polar residues; sequence KSPCETISSPSSTL. Polar residues predominate over residues 440–455; sequence IASNSPGSSPKTSDPT. The span at 461-480 shows a compositional bias: low complexity; the sequence is TPLLSPSSSTSASSTAKTPL. Serine 465 is subject to Phosphoserine. 11 ANK repeats span residues 896–928, 934–963, 967–996, 1000–1029, 1040–1069, 1078–1107, 1111–1140, 1144–1173, 1177–1206, 1210–1239, and 1243–1272; these read EGLSAALASLRNLYTPNVKVSRLLILGGANVNY, NNAPILCVQSHLGHEEVVTLLLEFGACLDG, NGMTALCYAAAAGHMKLVCLLTKKGVRVDH, KGQCALVHSALRGHGDILQYLLTCEWSPGP, ALQQALTAAASMGHSSVVQCLLGMEKEHEV, WGETALTAAAGRGKLEVCELLLGHGAAVSR, RGVPPLFCAARQGHWQIVRLLLERGCDVNL, QGRTPLMVAACEGHLSTVEFLLSKGAALSS, EGLSALSWACLKGHRAVVQYLVEEGAAIDQ, NGRTPLDLAAFYGDAETVLYLVEKGAVIEH, and SGMRPLDRAIGCRNTSVVVALLRKGAKLGN. 3 TPR repeats span residues 1289–1322, 1336–1369, and 1371–1403; these read LQKLMEEGNVMYKKGKMKEAAQRYQYALRKFPRE, VSLYLNLSRCRRKTNDFGMAEEFASKALELKPKS, and EAFYARARAKRNSRQFVAALADLQEAVKLCPTN. The span at 1421 to 1431 shows a compositional bias: low complexity; that stretch reads QRSQQQKQQGP. Disordered stretches follow at residues 1421-1485 and 1636-1696; these read QRSQ…SVPS and VAVD…KVQG. Serine 1439 carries the phosphoserine modification. 2 stretches are compositionally biased toward low complexity: residues 1467-1485 and 1659-1689; these read QEESVSPTPRSQPSSSVPS and SLTSSGSSGSPSSSIKMSSSTSSLTSSSSFS. Phosphoserine occurs at positions 1668, 1676, and 1677.

It belongs to the TANC family. In terms of assembly, interacts probably directly with DLG1, DLG4, HOMER1. Interacts with DLGAP1, INA, CAMK2A, GRIN2B and GRIA1. Interacts with TNIK. Interacts with MINK1. Phosphorylated; by MINK1 and TNIK upon stimulation by RAP2A.

The protein resides in the postsynaptic density. In terms of biological role, may be a scaffold component in the postsynaptic density. The polypeptide is Protein TANC1 (TANC1) (Homo sapiens (Human)).